Consider the following 849-residue polypeptide: Envelope glycoprotein gp160 (849 aa).

Positions 1 to 31 (MRVKGIQRNWQHLWKWGTLILGLVIICSASD) are cleaved as a signal peptide. At 32–670 (NLWVTVYYGV…ISNWLWYIRI (639 aa)) the chain is on the extracellular side. Cys-53 and Cys-73 are disulfide-bonded. N-linked (GlcNAc...) asparagine; by host glycosylation is found at Asn-87, Asn-129, Asn-137, Asn-142, Asn-153, Asn-185, Asn-195, Asn-232, Asn-239, Asn-260, Asn-274, Asn-287, Asn-299, Asn-329, Asn-341, Asn-354, and Asn-358. 5 cysteine pairs are disulfide-bonded: Cys-118/Cys-203, Cys-125/Cys-194, Cys-130/Cys-154, Cys-216/Cys-245, and Cys-226/Cys-237. The V1 stretch occupies residues 130-153 (CTNVNSANHTEANNTVENKEEIKN). The V2 stretch occupies residues 154 to 194 (CSFKITTERGGKKKEEYALFYKLDVVPISNGNKTSYRLIHC). A V3 region spans residues 294–327 (CIRPNNNTRKSIPIGPGQAFYATGDIIGDIRQAH). Cys-294 and Cys-328 are oxidised to a cystine. The CD4-binding loop stretch occupies residues 360 to 370 (SAGGDLEITTH). Cystine bridges form between Cys-374–Cys-430 and Cys-381–Cys-403. Residues 381-403 (CNTSGLFNNNISNINNETITLPC) are V4. N-linked (GlcNAc...) asparagine; by host glycans are attached at residues Asn-382, Asn-390, Asn-396, Asn-433, and Asn-447. V5 stretches follow at residues 446–457 (NNDSTEETFRPG) and 448–457 (DSTEETFRPG). Residues 498 to 518 (AVGLGAVFLGFLGAAGSTMGA) are fusion peptide. Residues 560–578 (KQLQSRVLAIERYLKDQQL) form an immunosuppression region. Cys-584 and Cys-590 are joined by a disulfide. Residues Asn-597, Asn-602, Asn-611, and Asn-623 are each glycosylated (N-linked (GlcNAc...) asparagine; by host). Positions 619–653 (REIHNYTQHIYSLIEESQNQQEKNEQDLLALDKWA) form a coiled coil. Positions 648-669 (ALDKWASLWNWFDISNWLWYIR) are MPER; binding to GalCer. The chain crosses the membrane as a helical span at residues 671 to 691 (FIMIVGGLIGLRIVFAVLSIV). Residues 692–849 (NRVRQGYSPL…IRQGLERALL (158 aa)) are Cytoplasmic-facing. The YXXL motif; contains endocytosis signal motif lies at 698–701 (YSPL). The segment at 709 to 729 (HQREPDRLGKTEEGGGEQDRD) is disordered. Residue Cys-750 is the site of S-palmitoyl cysteine; by host attachment. Positions 848–849 (LL) match the Di-leucine internalization motif motif.

This sequence belongs to the HIV-1 env protein family. The mature envelope protein (Env) consists of a homotrimer of non-covalently associated gp120-gp41 heterodimers. The resulting complex protrudes from the virus surface as a spike. There seems to be as few as 10 spikes on the average virion. Interacts with host CD4, CCR5 and CXCR4. Gp120 also interacts with the C-type lectins CD209/DC-SIGN and CLEC4M/DC-SIGNR (collectively referred to as DC-SIGN(R)). Gp120 and gp41 interact with GalCer. Gp120 interacts with host ITGA4/ITGB7 complex; on CD4+ T-cells, this interaction results in rapid activation of integrin ITGAL/LFA-1, which facilitates efficient cell-to-cell spreading of HIV-1. Gp120 interacts with cell-associated heparan sulfate; this interaction increases virus infectivity on permissive cells and may be involved in infection of CD4- cells. In terms of assembly, the mature envelope protein (Env) consists of a homotrimer of non-covalently associated gp120-gp41 heterodimers. The resulting complex protrudes from the virus surface as a spike. There seems to be as few as 10 spikes on the average virion. Post-translationally, highly glycosylated by host. The high number of glycan on the protein is reffered to as 'glycan shield' because it contributes to hide protein sequence from adaptive immune system. Palmitoylation of the transmembrane protein and of Env polyprotein (prior to its proteolytic cleavage) is essential for their association with host cell membrane lipid rafts. Palmitoylation is therefore required for envelope trafficking to classical lipid rafts, but not for viral replication. In terms of processing, specific enzymatic cleavages in vivo yield mature proteins. Envelope glycoproteins are synthesized as an inactive precursor that is heavily N-glycosylated and processed likely by host cell furin in the Golgi to yield the mature SU and TM proteins. The cleavage site between SU and TM requires the minimal sequence [KR]-X-[KR]-R. About 2 of the 9 disulfide bonds of gp41 are reduced by P4HB/PDI, following binding to CD4 receptor.

It is found in the virion membrane. It localises to the host cell membrane. The protein localises to the host endosome membrane. Functionally, oligomerizes in the host endoplasmic reticulum into predominantly trimers. In a second time, gp160 transits in the host Golgi, where glycosylation is completed. The precursor is then proteolytically cleaved in the trans-Golgi and thereby activated by cellular furin or furin-like proteases to produce gp120 and gp41. In terms of biological role, attaches the virus to the host lymphoid cell by binding to the primary receptor CD4. This interaction induces a structural rearrangement creating a high affinity binding site for a chemokine coreceptor like CXCR4 and/or CCR5. Acts as a ligand for CD209/DC-SIGN and CLEC4M/DC-SIGNR, which are respectively found on dendritic cells (DCs), and on endothelial cells of liver sinusoids and lymph node sinuses. These interactions allow capture of viral particles at mucosal surfaces by these cells and subsequent transmission to permissive cells. HIV subverts the migration properties of dendritic cells to gain access to CD4+ T-cells in lymph nodes. Virus transmission to permissive T-cells occurs either in trans (without DCs infection, through viral capture and transmission), or in cis (following DCs productive infection, through the usual CD4-gp120 interaction), thereby inducing a robust infection. In trans infection, bound virions remain infectious over days and it is proposed that they are not degraded, but protected in non-lysosomal acidic organelles within the DCs close to the cell membrane thus contributing to the viral infectious potential during DCs' migration from the periphery to the lymphoid tissues. On arrival at lymphoid tissues, intact virions recycle back to DCs' cell surface allowing virus transmission to CD4+ T-cells. Its function is as follows. Acts as a class I viral fusion protein. Under the current model, the protein has at least 3 conformational states: pre-fusion native state, pre-hairpin intermediate state, and post-fusion hairpin state. During fusion of viral and target intracellular membranes, the coiled coil regions (heptad repeats) assume a trimer-of-hairpins structure, positioning the fusion peptide in close proximity to the C-terminal region of the ectodomain. The formation of this structure appears to drive apposition and subsequent fusion of viral and target cell membranes. Complete fusion occurs in host cell endosomes and is dynamin-dependent, however some lipid transfer might occur at the plasma membrane. The virus undergoes clathrin-dependent internalization long before endosomal fusion, thus minimizing the surface exposure of conserved viral epitopes during fusion and reducing the efficacy of inhibitors targeting these epitopes. Membranes fusion leads to delivery of the nucleocapsid into the cytoplasm. This Human immunodeficiency virus type 1 group M subtype G (isolate 92NG083) (HIV-1) protein is Envelope glycoprotein gp160.